Consider the following 917-residue polypeptide: Translation initiation factor IF-2 (917 aa).

A compositionally biased stretch (basic and acidic residues) spans 102–249; it reads EKSQAEEQAL…KWTAEPKAPE (148 aa). Residues 102 to 326 form a disordered region; the sequence is EKSQAEEQAL…KSSTLQQGFH (225 aa). The segment covering 279-293 has biased composition (basic residues); it reads RRGRTAKAPRAKKNN. The segment covering 294–306 has biased composition (basic and acidic residues); sequence RHSEKADREEARA. Positions 416 to 585 constitute a tr-type G domain; the sequence is SRAPVVTIMG…LLQAEVLELK (170 aa). Residues 425–432 are G1; the sequence is GHVDHGKT. Residue 425-432 coordinates GTP; that stretch reads GHVDHGKT. The interval 450-454 is G2; it reads GITQH. A G3 region spans residues 471 to 474; that stretch reads DTPG. GTP contacts are provided by residues 471-475 and 525-528; these read DTPGH and NKID. The segment at 525–528 is G4; that stretch reads NKID. The G5 stretch occupies residues 561–563; that stretch reads SAK.

The protein belongs to the TRAFAC class translation factor GTPase superfamily. Classic translation factor GTPase family. IF-2 subfamily.

It is found in the cytoplasm. Its function is as follows. One of the essential components for the initiation of protein synthesis. Protects formylmethionyl-tRNA from spontaneous hydrolysis and promotes its binding to the 30S ribosomal subunits. Also involved in the hydrolysis of GTP during the formation of the 70S ribosomal complex. This is Translation initiation factor IF-2 (infB) from Proteus vulgaris.